The sequence spans 275 residues: 3-methyl-2-oxobutanoate hydroxymethyltransferase (275 aa).

Mg(2+) contacts are provided by D49 and D88. Residues 49–50 (DS), D88, and K118 each bind 3-methyl-2-oxobutanoate. E120 contributes to the Mg(2+) binding site. E187 functions as the Proton acceptor in the catalytic mechanism.

This sequence belongs to the PanB family. Homodecamer; pentamer of dimers. The cofactor is Mg(2+).

Its subcellular location is the cytoplasm. It catalyses the reaction 3-methyl-2-oxobutanoate + (6R)-5,10-methylene-5,6,7,8-tetrahydrofolate + H2O = 2-dehydropantoate + (6S)-5,6,7,8-tetrahydrofolate. The protein operates within cofactor biosynthesis; (R)-pantothenate biosynthesis; (R)-pantoate from 3-methyl-2-oxobutanoate: step 1/2. Its function is as follows. Catalyzes the reversible reaction in which hydroxymethyl group from 5,10-methylenetetrahydrofolate is transferred onto alpha-ketoisovalerate to form ketopantoate. The polypeptide is 3-methyl-2-oxobutanoate hydroxymethyltransferase (Rhodospirillum centenum (strain ATCC 51521 / SW)).